We begin with the raw amino-acid sequence, 256 residues long: H-2 class II histocompatibility antigen, A-K alpha chain (256 aa).

The N-terminal stretch at 1-23 (MPRSRALILGVLALTTMLSLCGG) is a signal peptide. Positions 24-111 (EDDIEADHVG…KRSNSTPATN (88 aa)) are alpha-1. Residues 24–218 (EDDIEADHVG…IPAPMSELTE (195 aa)) are Extracellular-facing. Asn105 and Asn145 each carry an N-linked (GlcNAc...) asparagine glycan. Residues 112-205 (EAPQATVFPK…GLEEPVLKHW (94 aa)) form an alpha-2 region. In terms of domain architecture, Ig-like C1-type spans 114-206 (PQATVFPKSP…LEEPVLKHWE (93 aa)). A disulfide bond links Cys134 and Cys190. The segment at 206–218 (EPEIPAPMSELTE) is connecting peptide. Residues 219–241 (TVVCALGLSVGLVGIVVGTIFII) form a helical membrane-spanning segment. The Cytoplasmic segment spans residues 242-256 (QGLRSGGTSRHPGPL).

Belongs to the MHC class II family.

Its subcellular location is the membrane. The chain is H-2 class II histocompatibility antigen, A-K alpha chain (H2-Aa) from Mus musculus (Mouse).